The following is a 311-amino-acid chain: tRNA dimethylallyltransferase (311 aa).

Residue 16 to 23 (GPTASGKS) participates in ATP binding. Residue 18 to 23 (TASGKS) coordinates substrate. Residues 41 to 44 (DSMQ) are interaction with substrate tRNA.

It belongs to the IPP transferase family. Monomer. The cofactor is Mg(2+).

The catalysed reaction is adenosine(37) in tRNA + dimethylallyl diphosphate = N(6)-dimethylallyladenosine(37) in tRNA + diphosphate. Its function is as follows. Catalyzes the transfer of a dimethylallyl group onto the adenine at position 37 in tRNAs that read codons beginning with uridine, leading to the formation of N6-(dimethylallyl)adenosine (i(6)A). The polypeptide is tRNA dimethylallyltransferase (Geobacter sulfurreducens (strain ATCC 51573 / DSM 12127 / PCA)).